The sequence spans 428 residues: UPF0229 protein YeaH (428 aa).

Residues 78–90 (GNDHFIQNDRIER) are compositionally biased toward basic and acidic residues. Residues 78–111 (GNDHFIQNDRIERPQGGGGGGSGSGQGQASQDGE) form a disordered region. A compositionally biased stretch (gly residues) spans 92-103 (QGGGGGGSGSGQ).

This sequence belongs to the UPF0229 family.

The sequence is that of UPF0229 protein YeaH from Salmonella paratyphi C (strain RKS4594).